The sequence spans 804 residues: Phenylalanine--tRNA ligase beta subunit (804 aa).

A tRNA-binding domain is found at 38-148 (RSSLKGFVIA…EDAPIGGLFA (111 aa)). The B5 domain maps to 401 to 476 (PEIKQIAFPF…RIYGLDKIEP (76 aa)). Positions 454, 460, 463, and 464 each coordinate Mg(2+). In terms of domain architecture, FDX-ACB spans 710–803 (SPFQMVRRDF…VTKATGAYLR (94 aa)).

The protein belongs to the phenylalanyl-tRNA synthetase beta subunit family. Type 1 subfamily. In terms of assembly, tetramer of two alpha and two beta subunits. Requires Mg(2+) as cofactor.

The protein resides in the cytoplasm. It carries out the reaction tRNA(Phe) + L-phenylalanine + ATP = L-phenylalanyl-tRNA(Phe) + AMP + diphosphate + H(+). This is Phenylalanine--tRNA ligase beta subunit from Bartonella quintana (strain Toulouse) (Rochalimaea quintana).